Consider the following 2715-residue polypeptide: Histone-lysine N-methyltransferase 2B (2715 aa).

The span at 1-11 (MAAAAGGGSCP) shows a compositional bias: gly residues. 4 disordered regions span residues 1 to 65 (MAAA…GEDT), 81 to 302 (RRLW…GGLP), 320 to 518 (SLGL…PKST), and 532 to 771 (VSAR…QMPP). Position 2 is an N-acetylalanine (Ala2). Over residues 12-24 (GPGSARGRFPGRP) the composition is skewed to low complexity. The short motif at 17-36 (RGRFPGRPRGAGGGGGRGGR) is the Menin-binding motif (MBM) element. Composition is skewed to gly residues over residues 25-38 (RGAGGGGGRGGRGN) and 49-60 (RGGGATGPGGAE). Positions 37-44 (GNGAERVR) form a DNA-binding region, a.T hook 1. Over residues 109 to 123 (PEEESSDGESDEEEF) the composition is skewed to acidic residues. A DNA-binding region (a.T hook 2) is located at residues 110–117 (EEESSDGE). Ser113, Ser114, and Ser118 each carry phosphoserine. A compositionally biased stretch (basic residues) spans 144-158 (QRGRAPRGRGRKHKT). The segment covering 160 to 176 (PLPPPRLADVAPTPPKT) has biased composition (pro residues). Residues 199–208 (RAQAPQAPRS) show a composition bias toward low complexity. The residue at position 351 (Ser351) is a Phosphoserine. Positions 357–365 (QEQKLDDEE) form a DNA-binding region, a.T hook 3. Positions 361–374 (LDDEEEEKKEEEEK) are enriched in acidic residues. The span at 375-387 (DKEGEEKEERAVA) shows a compositional bias: basic and acidic residues. Over residues 401–449 (LPPPPLTPPAPSPPPPLPPPSTSPPPPLCPPPPPPVSPPPLPSPPPPPA) the composition is skewed to pro residues. Over residues 545–556 (RFMDEDPPKPPK) the composition is skewed to basic and acidic residues. A compositionally biased stretch (pro residues) spans 568–596 (TTSPPVPQEPAPVPSPPRAPTPPSTPVPL). Over residues 597-608 (PEKRRSILREPT) the composition is skewed to basic and acidic residues. Pro residues predominate over residues 618-637 (LPPPPPAPPPPPAPSPPPAP). A compositionally biased stretch (low complexity) spans 731–751 (PQTQAQLLQPLQALQTQLLPQ). Residues 752–769 (ALPPPQPQLQPPPSPQQM) are compositionally biased toward pro residues. Lys805 participates in a covalent cross-link: Glycyl lysine isopeptide (Lys-Gly) (interchain with G-Cter in SUMO2). Disordered stretches follow at residues 819–868 (PLSP…GPRI) and 894–959 (SALP…HHGK). Phosphoserine is present on residues Ser821, Ser844, and Ser861. Over residues 836-857 (ISDRGPVRSEDESVEAKRERPS) the composition is skewed to basic and acidic residues. Residues 907 to 917 (EDTSSASETES) are compositionally biased toward low complexity. At Ser936 the chain carries Phosphoserine. Basic residues predominate over residues 948-959 (TPRRSLPSHHGK). A CXXC-type zinc finger spans residues 959–1006 (KKMRMARCGHCRGCLRVQDCGSCVNCLDKPKFGGPNTKKQCCVYRKCD). Zn(2+) is bound by residues Cys966, Cys969, Cys972, Cys978, Cys981, Cys984, Cys1000, and Cys1005. The segment at 1027–1132 (LLPWDSDESP…RPRKPTLQPV (106 aa)) is disordered. A phosphoserine mark is found at Ser1032, Ser1035, Ser1092, and Ser1095. A Glycyl lysine isopeptide (Lys-Gly) (interchain with G-Cter in SUMO2) cross-link involves residue Lys1136. The interval 1146–1166 (LAPGPFASFPNGWTGKQKSPD) is disordered. 3 consecutive PHD-type zinc fingers follow at residues 1201 to 1252 (PMVC…CKFC), 1249 to 1303 (CKFC…CVRC), and 1335 to 1396 (GNYC…CAGA). A Bromo domain is found at 1404 to 1504 (ALSGALQGGL…GLLLKLLESA (101 aa)). A disordered region spans residues 1545 to 1567 (QQEPETPESGQPPGDPSAAFQGK). The C2HC pre-PHD-type zinc-finger motif lies at 1578-1618 (PRQCALCLKYGDADSKEAGRLLYIGQNEWTHVNCAIWSAEV). The PHD-type 4 zinc-finger motif lies at 1639-1686 (MRCELCLKPGATVGCCLSSCLSNFHFMCARASYCIFQDDKKVFCQKHT). Residues 1727–1783 (AINVLIGSIRIDSLGTLSDLSDCEGRLFPIGYQCSRLYWSTVDARRRCWYRCRILEY) form the FYR N-terminal domain. Disordered stretches follow at residues 1806–1978 (HSPA…PDFE), 2008–2093 (VAAG…VVRA), 2118–2162 (LKNL…PTRT), and 2280–2412 (RVST…RTGP). Residues 1876-1894 (PLGGVSFGPLPSPGSPSSL) are compositionally biased toward low complexity. A phosphoserine mark is found at Ser1930 and Ser1936. The segment covering 1960–1972 (PPGPAPSPPPPED) has biased composition (pro residues). Residues 2062-2072 (DGVDDGTDSEA) show a composition bias toward acidic residues. Phosphothreonine occurs at positions 2068 and 2083. A compositionally biased stretch (polar residues) spans 2144-2153 (NGSQPSQGLT). 2 positions are modified to phosphoserine: Ser2288 and Ser2348. Positions 2342–2351 (EPAGEESPGP) are enriched in low complexity. Over residues 2359–2373 (LPLPEDGPPQVPDGP) the composition is skewed to pro residues. Positions 2411–2492 (GPHLRFEISS…QRCQHYKFRY (82 aa)) constitute an FYR C-terminal domain. The WDR5 interaction motif (WIN) signature appears at 2508 to 2513 (GAARAE). The SET domain occupies 2575–2691 (EAVGVYRSAI…RGEELTYDYK (117 aa)). Residues His2585, Arg2587, Tyr2629, and 2652–2653 (NH) each bind S-adenosyl-L-methionine. Cys2655 and Cys2703 together coordinate Zn(2+). A Post-SET domain is found at 2699–2715 (NKLPCNCGAKRCRRFLN). Residue Asn2704 coordinates S-adenosyl-L-methionine. Positions 2705 and 2710 each coordinate Zn(2+).

Belongs to the class V-like SAM-binding methyltransferase superfamily. Histone-lysine methyltransferase family. TRX/MLL subfamily. In terms of assembly, component of the menin-associated histone methyltransferase complex, at least composed of KMT2B/MLL4, ASH2L, RBBP5, WDR5, DPY30, MEN1; the complex interacts with POLR2A and POLR2B via MEN1. Interacts with NFE2. Interacts with KDM6B. Interacts (via WIN motif) with WDR5. Interacts (via MBM motif) with MEN1. Forms a core complex with the evolutionary conserved subcomplex WRAD composed of WDR5, RBBP5, ASH2L/ASH2 and DPY30 subunits; WRAD differentially stimulates the methyltransferase activity. Widely expressed. Highest levels in testis. Also found in brain with higher expression in the cerebellum than in any other region, bone marrow, heart, muscle, kidney, placenta, spleen, thymus, prostate, ovary, intestine, colon, peripheral blood lymphocytes and pancreas. Often amplified in pancreatic carcinomas.

It localises to the nucleus. It catalyses the reaction L-lysyl(4)-[histone H3] + S-adenosyl-L-methionine = N(6)-methyl-L-lysyl(4)-[histone H3] + S-adenosyl-L-homocysteine + H(+). The enzyme catalyses N(6)-methyl-L-lysyl(4)-[histone H3] + S-adenosyl-L-methionine = N(6),N(6)-dimethyl-L-lysyl(4)-[histone H3] + S-adenosyl-L-homocysteine + H(+). Its function is as follows. Histone methyltransferase that catalyzes methyl group transfer from S-adenosyl-L-methionine to the epsilon-amino group of 'Lys-4' of histone H3 (H3K4) via a non-processive mechanism. Part of chromatin remodeling machinery predominantly forms H3K4me1 and H3K4me2 methylation marks at active chromatin sites where transcription and DNA repair take place. Likely plays a redundant role with KMT2C in enriching H3K4me1 marks on primed and active enhancer elements. Plays a central role in beta-globin locus transcription regulation by being recruited by NFE2. Plays an important role in controlling bulk H3K4me during oocyte growth and preimplantation development. Required during the transcriptionally active period of oocyte growth for the establishment and/or maintenance of bulk H3K4 trimethylation (H3K4me3), global transcriptional silencing that preceeds resumption of meiosis, oocyte survival and normal zygotic genome activation. This Homo sapiens (Human) protein is Histone-lysine N-methyltransferase 2B (KMT2B).